Reading from the N-terminus, the 60-residue chain is Short neurotoxin 1 (60 aa).

Cystine bridges form between Cys3–Cys22, Cys17–Cys39, Cys41–Cys52, and Cys53–Cys58.

This sequence belongs to the three-finger toxin family. Short-chain subfamily. Type I alpha-neurotoxin sub-subfamily. In terms of tissue distribution, expressed by the venom gland.

It is found in the secreted. Binds to muscle nicotinic acetylcholine receptor (nAChR) and inhibit acetylcholine from binding to the receptor, thereby impairing neuromuscular transmission. The polypeptide is Short neurotoxin 1 (Dendroaspis viridis (Western green mamba)).